The chain runs to 286 residues: Small ribosomal subunit protein uS2 (286 aa).

Residues 231–286 (ERAQAEAKAAAGDNDAPVSSEGESTEVASDAASTASETTATSSDESAAESSEAESK) form a disordered region. The segment covering 255 to 280 (TEVASDAASTASETTATSSDESAAES) has biased composition (low complexity).

The protein belongs to the universal ribosomal protein uS2 family.

The sequence is that of Small ribosomal subunit protein uS2 from Corynebacterium kroppenstedtii (strain DSM 44385 / JCM 11950 / CIP 105744 / CCUG 35717).